The chain runs to 1342 residues: DNA-directed RNA polymerase subunit beta (1342 aa).

This sequence belongs to the RNA polymerase beta chain family. The RNAP catalytic core consists of 2 alpha, 1 beta, 1 beta' and 1 omega subunit. When a sigma factor is associated with the core the holoenzyme is formed, which can initiate transcription.

The enzyme catalyses RNA(n) + a ribonucleoside 5'-triphosphate = RNA(n+1) + diphosphate. In terms of biological role, DNA-dependent RNA polymerase catalyzes the transcription of DNA into RNA using the four ribonucleoside triphosphates as substrates. The polypeptide is DNA-directed RNA polymerase subunit beta (Glaesserella parasuis serovar 5 (strain SH0165) (Haemophilus parasuis)).